A 1851-amino-acid chain; its full sequence is Protein lap4 (1851 aa).

LRR repeat units lie at residues 38 to 59 (TLEELFLDANHIRDLPKNFFRL), 61 to 82 (RLRKLGLSDNEIGRLPPDIQNF), 84 to 105 (NLVELDVSRNDIPDIPDDIKHL), 107 to 128 (SLQVADFSSNPIPKLPSGFSQL), 130 to 152 (NLTVLGLNDMSLTTLPADFGSLT), 153 to 174 (QLESLELRENLLKHLPETISQL), 176 to 197 (KLKRLDLGDNEIEDLPPYLGYL), 199 to 220 (GLHELWLDHNQLQRLPPELGLL), 222 to 243 (KLTYLDVSENRLEELPNEISGL), 245 to 267 (SLTDLDLAQNLLEALPDGIAKLS), 268 to 289 (RLTILKLDQNRLQRLNDTLGNC), 291 to 312 (NMQELILTENFLSELPASIGQM), 314 to 335 (KLNNLNVDRNALEYLPLEIGQC), 337 to 358 (NLGVLSLRDNKLKKLPPELGNC), 360 to 382 (VLHVLDVSGNQLLYLPYSLVNLQ), and 383 to 403 (LKAVWLSENQSQPLLTFQPDT). 3 disordered regions span residues 427-474 (PARD…KDLK), 584-641 (VGGS…VQHL), and 656-719 (SQER…PDNL). 2 positions are modified to phosphoserine: S433 and S435. Residues 438-461 (FEEREPSRTVVKFSEEATQEKETP) are compositionally biased toward basic and acidic residues. Positions 471–492 (KDLKAKAQKLKVERSRNEEHAN) form a coiled coil. Acidic residues predominate over residues 589–601 (EVQDDDEQEDEFE). Basic residues predominate over residues 620-639 (RPPKLHRRDTPHHLKNKRVQ). Positions 656–672 (SQERNDTTPQHSLSGKV) are enriched in polar residues. Acidic residues predominate over residues 676 to 686 (IEEEEQLEVEQ). Positions 677-693 (EEEEQLEVEQEQQQQQQ) form a coiled coil. Residues S700, S702, and S705 each carry the phosphoserine modification. Residues 731–818 (EIHIERTAAG…VLVLVVQREV (88 aa)) enclose the PDZ 1 domain. Residues S834 and S837 each carry the phosphoserine modification. The PDZ 2 domain occupies 929–1019 (HTTLIRDQIG…FVRLVLQREY (91 aa)). S1031 and S1041 each carry phosphoserine. Positions 1067–1150 (LATTTPTPKP…EAQPSSLRPL (84 aa)) are disordered. Polar residues-rich tracts occupy residues 1080 to 1097 (ASISNNNNTLPSSKTNGF) and 1132 to 1149 (GSTTSGDSGEAQPSSLRP). 2 PDZ domains span residues 1239–1329 (EVVL…QHDP) and 1336–1428 (EVLL…CKGY). A compositionally biased stretch (polar residues) spans 1448 to 1467 (NSSASCSGGSRQGSRASETG). The segment at 1448 to 1485 (NSSASCSGGSRQGSRASETGSELSQSQSVSSLDHEEDE) is disordered. A compositionally biased stretch (low complexity) spans 1468-1478 (SELSQSQSVSS). Phosphoserine occurs at positions 1475, 1477, and 1478. Residue T1599 is modified to Phosphothreonine. The span at 1647 to 1669 (AESANSAGAPSPAVPASTPGSAP) shows a compositional bias: low complexity. Disordered regions lie at residues 1647–1751 (AESA…KVFS) and 1772–1851 (LRRD…VFRS). Basic and acidic residues predominate over residues 1725–1751 (VSDKKRFFESAMEDQHKPTQKTDKVFS). Positions 1753–1790 (LSKDEVEKLRQEEERKIATLRRDKNSRLLDAANDNIDK) form a coiled coil. Residues 1807 to 1816 (DDNDDSDQEE) show a composition bias toward acidic residues. Positions 1831 to 1851 (HFDDAEDMRNPLDEIEAVFRS) are enriched in basic and acidic residues.

It belongs to the LAP (LRR and PDZ) protein family. In terms of tissue distribution, during germ band extension, expression of isoform A occurs predominantly in neuroblasts derived from the neuro-ectoderm and later is restricted to CNS neurons and pole cells. Isoform C is strongly expressed in PNS and a subset of CNS neurons. In the adult, expressed in third antennal segment and maxillary palps, major olfactory organs and in Johnstons organ in the second antennal segment. Expression is also observed in cortical regions of the brain. Isoforms expressed in epithelia are coexpressed with dlg1 throughout development.

Its subcellular location is the cytoplasm. It localises to the apicolateral cell membrane. It is found in the cell junction. The protein localises to the septate junction. In terms of biological role, required for polarization of the embryonic, imaginal disk and follicular epithelia. Specifically restricts apical membrane determinants to the apical cell surface; acts to exclude crb from the basolateral domain and define adherens junction position. Regulates cellular growth and differentiation; acts as a tumor suppressor. Essential for odor guided behavior. The sequence is that of Protein lap4 from Drosophila melanogaster (Fruit fly).